Reading from the N-terminus, the 293-residue chain is Cep170-like protein (293 aa).

Disordered stretches follow at residues Pro78–Thr110 and Phe217–Glu270. Residues Lys227–Leu245 show a composition bias toward polar residues.

The protein belongs to the CEP170 family.

This Homo sapiens (Human) protein is Cep170-like protein (CEP170P1).